A 329-amino-acid chain; its full sequence is UDP-N-acetylenolpyruvoylglucosamine reductase (329 aa).

An FAD-binding PCMH-type domain is found at 28–192 (RVGGPADLLC…ARVEVRLHPG (165 aa)). R172 is a catalytic residue. The active-site Proton donor is the S221. E291 is an active-site residue. Residues 307–329 (DGHAAAGGGPGAASGGVRPPEAT) form a disordered region. The span at 311–320 (AAGGGPGAAS) shows a compositional bias: gly residues.

It belongs to the MurB family. It depends on FAD as a cofactor.

Its subcellular location is the cytoplasm. The enzyme catalyses UDP-N-acetyl-alpha-D-muramate + NADP(+) = UDP-N-acetyl-3-O-(1-carboxyvinyl)-alpha-D-glucosamine + NADPH + H(+). Its pathway is cell wall biogenesis; peptidoglycan biosynthesis. Its function is as follows. Cell wall formation. This Anaeromyxobacter dehalogenans (strain 2CP-1 / ATCC BAA-258) protein is UDP-N-acetylenolpyruvoylglucosamine reductase.